Reading from the N-terminus, the 292-residue chain is UPF0282 protein MJ1629 (292 aa).

This sequence belongs to the UPF0282 family.

This is UPF0282 protein MJ1629 from Methanocaldococcus jannaschii (strain ATCC 43067 / DSM 2661 / JAL-1 / JCM 10045 / NBRC 100440) (Methanococcus jannaschii).